The primary structure comprises 165 residues: Shikimate kinase (165 aa).

Glycine 11–threonine 16 provides a ligand contact to ATP. Mg(2+) is bound at residue threonine 15. The substrate site is built by aspartate 33, arginine 57, and glycine 78. Arginine 116 serves as a coordination point for ATP. Arginine 134 contributes to the substrate binding site.

It belongs to the shikimate kinase family. Monomer. It depends on Mg(2+) as a cofactor.

The protein localises to the cytoplasm. It catalyses the reaction shikimate + ATP = 3-phosphoshikimate + ADP + H(+). The protein operates within metabolic intermediate biosynthesis; chorismate biosynthesis; chorismate from D-erythrose 4-phosphate and phosphoenolpyruvate: step 5/7. In terms of biological role, catalyzes the specific phosphorylation of the 3-hydroxyl group of shikimic acid using ATP as a cosubstrate. This Bacillus mycoides (strain KBAB4) (Bacillus weihenstephanensis) protein is Shikimate kinase.